A 64-amino-acid polypeptide reads, in one-letter code: Small ribosomal subunit protein bS21 (64 aa).

This sequence belongs to the bacterial ribosomal protein bS21 family.

This Neorickettsia sennetsu (strain ATCC VR-367 / Miyayama) (Ehrlichia sennetsu) protein is Small ribosomal subunit protein bS21.